Here is a 40-residue protein sequence, read N- to C-terminus: Accessory gland-specific peptide 57Db (40 aa).

An N-terminal signal peptide occupies residues 1-17 (MKITSALVLLFAGVAFA).

In terms of tissue distribution, lumen fluid of male accessory glands, becomes seminal fluid.

The protein localises to the secreted. In terms of biological role, transferred from male to female during mating and may affect egglaying and behavior after mating. The chain is Accessory gland-specific peptide 57Db (Mst57Db) from Drosophila melanogaster (Fruit fly).